The following is a 151-amino-acid chain: Large ribosomal subunit protein uL15 (151 aa).

A disordered region spans residues 37-57 (GMRGQKSRSGRPTRPGFEGGQ).

It belongs to the universal ribosomal protein uL15 family. As to quaternary structure, part of the 50S ribosomal subunit.

Functionally, binds to the 23S rRNA. The sequence is that of Large ribosomal subunit protein uL15 from Prochlorococcus marinus (strain MIT 9313).